The sequence spans 146 residues: Ribosomal RNA large subunit methyltransferase H (146 aa).

Residues Leu68, Gly95, and 114-119 (LSSLTF) contribute to the S-adenosyl-L-methionine site.

It belongs to the RNA methyltransferase RlmH family. As to quaternary structure, homodimer.

It localises to the cytoplasm. The catalysed reaction is pseudouridine(1915) in 23S rRNA + S-adenosyl-L-methionine = N(3)-methylpseudouridine(1915) in 23S rRNA + S-adenosyl-L-homocysteine + H(+). Its function is as follows. Specifically methylates the pseudouridine at position 1915 (m3Psi1915) in 23S rRNA. The protein is Ribosomal RNA large subunit methyltransferase H of Thermodesulfovibrio yellowstonii (strain ATCC 51303 / DSM 11347 / YP87).